Reading from the N-terminus, the 159-residue chain is Globin-like protein (159 aa).

One can recognise a Globin domain in the interval 1–152 (MSMNRQEISD…FNAESQTHLK (152 aa)). H101 is a heme binding site.

This sequence belongs to the globin family. In terms of assembly, homodimer. As to expression, expressed mainly in a subset of neuronal cells and in head muscular tissue.

The protein resides in the cytoplasm. Its function is as follows. May be a globin and may play a role in oxygen transport. In Caenorhabditis elegans, this protein is Globin-like protein (glb-1).